The sequence spans 141 residues: General odorant-binding protein 57b (141 aa).

An N-terminal signal peptide occupies residues 1 to 22 (MFIYRLVFIAPLILLLFSLAKA). Disulfide bonds link Cys39-Cys77, Cys73-Cys120, and Cys111-Cys129.

The protein belongs to the PBP/GOBP family.

Functionally, present in the aqueous fluid surrounding olfactory sensory dendrites and are thought to aid in the capture and transport of hydrophobic odorants into and through this fluid. This is General odorant-binding protein 57b from Drosophila melanogaster (Fruit fly).